The sequence spans 394 residues: GDSL esterase/lipase At2g27360 (394 aa).

The signal sequence occupies residues 1–24 (MASQDCHMLLSFFISTFLITVVTS). Ser40 serves as the catalytic Nucleophile. 2 N-linked (GlcNAc...) asparagine glycosylation sites follow: Asn136 and Asn319. Active-site residues include Asp344 and His347. Asn371 and Asn382 each carry an N-linked (GlcNAc...) asparagine glycan.

It belongs to the 'GDSL' lipolytic enzyme family.

The protein resides in the secreted. In Arabidopsis thaliana (Mouse-ear cress), this protein is GDSL esterase/lipase At2g27360.